The primary structure comprises 224 residues: Thiamine-phosphate synthase (224 aa).

Residues Q41–K45 and D77 each bind 4-amino-2-methyl-5-(diphosphooxymethyl)pyrimidine. D78 and D97 together coordinate Mg(2+). S116 serves as a coordination point for 4-amino-2-methyl-5-(diphosphooxymethyl)pyrimidine. A 2-[(2R,5Z)-2-carboxy-4-methylthiazol-5(2H)-ylidene]ethyl phosphate-binding site is contributed by T143 to S145. 4-amino-2-methyl-5-(diphosphooxymethyl)pyrimidine is bound at residue K146. 2-[(2R,5Z)-2-carboxy-4-methylthiazol-5(2H)-ylidene]ethyl phosphate-binding positions include G174 and I194–S195.

The protein belongs to the thiamine-phosphate synthase family. Mg(2+) is required as a cofactor.

The enzyme catalyses 2-[(2R,5Z)-2-carboxy-4-methylthiazol-5(2H)-ylidene]ethyl phosphate + 4-amino-2-methyl-5-(diphosphooxymethyl)pyrimidine + 2 H(+) = thiamine phosphate + CO2 + diphosphate. It catalyses the reaction 2-(2-carboxy-4-methylthiazol-5-yl)ethyl phosphate + 4-amino-2-methyl-5-(diphosphooxymethyl)pyrimidine + 2 H(+) = thiamine phosphate + CO2 + diphosphate. It carries out the reaction 4-methyl-5-(2-phosphooxyethyl)-thiazole + 4-amino-2-methyl-5-(diphosphooxymethyl)pyrimidine + H(+) = thiamine phosphate + diphosphate. It functions in the pathway cofactor biosynthesis; thiamine diphosphate biosynthesis; thiamine phosphate from 4-amino-2-methyl-5-diphosphomethylpyrimidine and 4-methyl-5-(2-phosphoethyl)-thiazole: step 1/1. Condenses 4-methyl-5-(beta-hydroxyethyl)thiazole monophosphate (THZ-P) and 2-methyl-4-amino-5-hydroxymethyl pyrimidine pyrophosphate (HMP-PP) to form thiamine monophosphate (TMP). This is Thiamine-phosphate synthase from Latilactobacillus sakei subsp. sakei (strain 23K) (Lactobacillus sakei subsp. sakei).